The following is a 484-amino-acid chain: Glutamyl-tRNA(Gln) amidotransferase subunit A (484 aa).

Catalysis depends on charge relay system residues lysine 74 and serine 149. Residue serine 173 is the Acyl-ester intermediate of the active site.

It belongs to the amidase family. GatA subfamily. Heterotrimer of A, B and C subunits.

The catalysed reaction is L-glutamyl-tRNA(Gln) + L-glutamine + ATP + H2O = L-glutaminyl-tRNA(Gln) + L-glutamate + ADP + phosphate + H(+). Allows the formation of correctly charged Gln-tRNA(Gln) through the transamidation of misacylated Glu-tRNA(Gln) in organisms which lack glutaminyl-tRNA synthetase. The reaction takes place in the presence of glutamine and ATP through an activated gamma-phospho-Glu-tRNA(Gln). This chain is Glutamyl-tRNA(Gln) amidotransferase subunit A, found in Prochlorococcus marinus subsp. pastoris (strain CCMP1986 / NIES-2087 / MED4).